Consider the following 447-residue polypeptide: Glutamate--tRNA ligase 1 (447 aa).

The short motif at 10–20 (PSPTGMLHVGN) is the 'HIGH' region element. The short motif at 240 to 244 (KISKR) is the 'KMSKS' region element. Residue K243 coordinates ATP.

It belongs to the class-I aminoacyl-tRNA synthetase family. Glutamate--tRNA ligase type 1 subfamily. In terms of assembly, monomer.

The protein resides in the cytoplasm. The enzyme catalyses tRNA(Glu) + L-glutamate + ATP = L-glutamyl-tRNA(Glu) + AMP + diphosphate. In terms of biological role, catalyzes the attachment of glutamate to tRNA(Glu) in a two-step reaction: glutamate is first activated by ATP to form Glu-AMP and then transferred to the acceptor end of tRNA(Glu). The sequence is that of Glutamate--tRNA ligase 1 from Rickettsia conorii (strain ATCC VR-613 / Malish 7).